A 279-amino-acid chain; its full sequence is NADPH-dependent 7-cyano-7-deazaguanine reductase (279 aa).

A substrate-binding site is contributed by Ile86 to Ser88. Residue Ser88–Lys89 coordinates NADPH. Residue Cys187 is the Thioimide intermediate of the active site. Asp194 acts as the Proton donor in catalysis. Residue His226–Glu227 participates in substrate binding. Arg255 to Gly256 serves as a coordination point for NADPH.

Belongs to the GTP cyclohydrolase I family. QueF type 2 subfamily. In terms of assembly, homodimer.

The protein localises to the cytoplasm. The enzyme catalyses 7-aminomethyl-7-carbaguanine + 2 NADP(+) = 7-cyano-7-deazaguanine + 2 NADPH + 3 H(+). Its pathway is tRNA modification; tRNA-queuosine biosynthesis. Functionally, catalyzes the NADPH-dependent reduction of 7-cyano-7-deazaguanine (preQ0) to 7-aminomethyl-7-deazaguanine (preQ1). In Haemophilus ducreyi (strain 35000HP / ATCC 700724), this protein is NADPH-dependent 7-cyano-7-deazaguanine reductase.